The following is a 786-amino-acid chain: Exo-beta-D-glucosaminidase (786 aa).

Substrate is bound by residues Tyr53, 102 to 103, 178 to 179, Glu306, Glu347, and Tyr379; these read GE and DE. The active-site Proton donor is Glu179. The active-site Nucleophile is Glu347.

This sequence belongs to the glycosyl hydrolase 35 family. As to quaternary structure, homodimer.

The protein localises to the cytoplasm. The catalysed reaction is beta-D-glucosaminyl-(1-&gt;4)-N-acetyl-D-glucosamine + H2O = D-glucosamine + N-acetyl-D-glucosamine. It participates in glycan degradation; chitin degradation. Exo-type enzyme that specifically cleaves the non-reducing terminal glycosidic bond of chitooligosaccharides. Catalyzes the hydrolysis of GlcN-GlcNAc to glucosamine (GlcN) and N-acetylglucosamine (GlcNAc). Involved in chitin degradation. Can also hydrolyze reduced chitobiose (GlcN2OH) and chitooligosaccharides of various chain lengths. In Thermococcus kodakarensis (strain ATCC BAA-918 / JCM 12380 / KOD1) (Pyrococcus kodakaraensis (strain KOD1)), this protein is Exo-beta-D-glucosaminidase.